The primary structure comprises 109 residues: Guanylate cyclase activator 2B (109 aa).

The first 23 residues, 1-23 (MKVLALPVAVAAMLLVLAQNTQS), serve as a signal peptide directing secretion. The propeptide occupies 24-94 (VYIQYEGFQV…NIFRALRSIS (71 aa)). Disulfide bonds link cysteine 65/cysteine 78, cysteine 98/cysteine 106, and cysteine 101/cysteine 109.

Belongs to the guanylin family. In terms of tissue distribution, small and large intestine and atria and ventricles of heart. Both uroguanylin and prouroguanylin are found in plasma.

The protein localises to the secreted. Its function is as follows. Endogenous activator of intestinal guanylate cyclase. It stimulates this enzyme through the same receptor binding region as the heat-stable enterotoxins. May be a potent physiological regulator of intestinal fluid and electrolyte transport. May be an autocrine/paracrine regulator of intestinal salt and water transport. The polypeptide is Guanylate cyclase activator 2B (GUCA2B) (Didelphis virginiana (North American opossum)).